The following is a 256-amino-acid chain: MSSSLHIESIGQGQELVILHGWGVNSSVFTPLHASLSEYRVHYVDLPGFGHSDPIDGDLDDWVDAIINQLPNTAIWIGWSLGGLVATKAALRYPEQVRGLVTIASSPCFMAREDESWPGIPPQVLSQFSTQLQQNIGKTIERFLAIQVMGSATAKEDIKQLKELVLSRPLPKNSALAQGLKMLENIDLRAQLPQIEQPWLRVWGRLDGLVPRRVPPLMPNHQAHFTDLLLPKASHAPFLSHRDEFLTGLTDWLNKF.

Residues 16–240 enclose the AB hydrolase-1 domain; sequence LVILHGWGVN…PKASHAPFLS (225 aa). Substrate contacts are provided by residues Trp22, 80–81, and 143–147; these read SL and FLAIQ. Ser80 functions as the Nucleophile in the catalytic mechanism. Active-site residues include Asp207 and His235. His235 serves as a coordination point for substrate.

The protein belongs to the AB hydrolase superfamily. Carboxylesterase BioH family. As to quaternary structure, monomer.

It is found in the cytoplasm. The enzyme catalyses 6-carboxyhexanoyl-[ACP] methyl ester + H2O = 6-carboxyhexanoyl-[ACP] + methanol + H(+). The protein operates within cofactor biosynthesis; biotin biosynthesis. The physiological role of BioH is to remove the methyl group introduced by BioC when the pimeloyl moiety is complete. It allows to synthesize pimeloyl-ACP via the fatty acid synthetic pathway through the hydrolysis of the ester bonds of pimeloyl-ACP esters. The polypeptide is Pimeloyl-[acyl-carrier protein] methyl ester esterase (Shewanella woodyi (strain ATCC 51908 / MS32)).